Reading from the N-terminus, the 317-residue chain is Melanocyte-stimulating hormone receptor (317 aa).

Residues 1-37 (MAVQGFQRRLLGSLNSTPTAIPQLGLAANQTGARCLE) are Extracellular-facing. A glycan (N-linked (GlcNAc...) asparagine) is linked at Asn29. A helical transmembrane segment spans residues 38-63 (VSIPDGLFLSLGLVSLVENVLVVATI). Residues 64–72 (AKNRNLHSP) are Cytoplasmic-facing. Residues 73–93 (TYCFICCLALSDLLVSGGNVL) traverse the membrane as a helical segment. The Extracellular portion of the chain corresponds to 94-118 (ETVVILLLEASALAARAAVVQPLDN). Residues 119–140 (VIDVITCSSMVSSLCFLGAIAV) traverse the membrane as a helical segment. At 141 to 163 (DRYVSIFYALRYHSIVTLPRARQ) the chain is on the cytoplasmic side. Residues 164–183 (AIAAIWVASVLFSTLFIAYY) traverse the membrane as a helical segment. At 184–191 (DHAAVLLC) the chain is on the extracellular side. A helical membrane pass occupies residues 192 to 211 (LVVFFLAMLVXMAVLYVHML). Residues 212–240 (ARACQHAQGIARLHKRQRPLHQGFGLKGA) are Cytoplasmic-facing. Residues 241–266 (VTLTILLGIFFLCWGPFFLHLTLIVL) form a helical membrane-spanning segment. At 267–279 (CPQHPTCSCIFKN) the chain is on the extracellular side. A helical transmembrane segment spans residues 280–300 (FNLFLTLIICNAIIDPLIYAF). The Cytoplasmic portion of the chain corresponds to 301 to 317 (RRQELRRTLKEGLTCSW). Residue Cys315 is the site of S-palmitoyl cysteine attachment.

It belongs to the G-protein coupled receptor 1 family. As to quaternary structure, interacts with MGRN1, but does not undergo MGRN1-mediated ubiquitination; this interaction competes with GNAS-binding and thus inhibits agonist-induced cAMP production. Interacts with OPN3; the interaction results in a decrease in MC1R-mediated cAMP signaling and ultimately a decrease in melanin production in melanocytes.

The protein resides in the cell membrane. Receptor for MSH (alpha, beta and gamma) and ACTH. The activity of this receptor is mediated by G proteins which activate adenylate cyclase. Mediates melanogenesis, the production of eumelanin (black/brown) and phaeomelanin (red/yellow), via regulation of cAMP signaling in melanocytes. This chain is Melanocyte-stimulating hormone receptor (MC1R), found in Hylobates muelleri (Mueller's Bornean gibbon).